The following is a 581-amino-acid chain: Arginine--tRNA ligase (581 aa).

Residues 122-132 (PNVAKPMHVGH) carry the 'HIGH' region motif.

It belongs to the class-I aminoacyl-tRNA synthetase family. In terms of assembly, monomer.

Its subcellular location is the cytoplasm. It carries out the reaction tRNA(Arg) + L-arginine + ATP = L-arginyl-tRNA(Arg) + AMP + diphosphate. This chain is Arginine--tRNA ligase, found in Francisella tularensis subsp. tularensis (strain WY96-3418).